The sequence spans 392 residues: MAAVAAFAGWLLRLRAAGADGPWRRLCGAGLSRGFLQSASAYGAAAQRRQVAHFTFQPDPEPVEYGQTQKMNLFQAVTSALDNSLAKDPTAVIFGEDVAFGGVFRCTVGLRDKYGKDRVFNTPLCEQGIVGFGIGIAVTGATAIAEIQFADYIFPAFDQIVNEAAKYRYRSGDLFNCGSLTIRSPWGCVGHGALYHSQSPEAFFAHCPGIKVVVPRSPFQAKGLLLSCIEDKNPCIFFEPKILYRAAVEQVPVEPYNIPLSQAEVIQEGSDVTLVAWGTQVHVIREVAAMAQEKLGVSCEVIDLRTILPWDVDTVCKSVIKTGRLLVSHEAPLTGGFASEISSTVQEECFLNLEAPISRVCGYDTPFPHIFEPFYIPDKWKCYDALRKMINY.

The transit peptide at 1 to 50 directs the protein to the mitochondrion; the sequence is MAAVAAFAGWLLRLRAAGADGPWRRLCGAGLSRGFLQSASAYGAAAQRRQ. Tyr152 is a thiamine diphosphate binding site. Residues Gly178, Leu180, Thr181, Cys228, and Asp231 each contribute to the K(+) site. Residue Lys232 is modified to N6-acetyllysine. K(+) is bound at residue Asn233. Lys241 is modified (N6-acetyllysine).

In terms of assembly, heterotetramer of 2 alpha/BCKDHA and 2 beta chains/BCKDHB that forms the branched-chain alpha-keto acid decarboxylase (E1) component of the BCKD complex. The branched-chain alpha-ketoacid dehydrogenase is a large complex composed of three major building blocks E1, E2 and E3. It is organized around E2, a 24-meric cubic core composed of DBT, to which are associated 6 to 12 copies of E1, and approximately 6 copies of the dehydrogenase E3, a DLD dimer. The cofactor is thiamine diphosphate.

It localises to the mitochondrion matrix. The enzyme catalyses N(6)-[(R)-lipoyl]-L-lysyl-[protein] + 3-methyl-2-oxobutanoate + H(+) = N(6)-[(R)-S(8)-2-methylpropanoyldihydrolipoyl]-L-lysyl-[protein] + CO2. Together with BCKDHA forms the heterotetrameric E1 subunit of the mitochondrial branched-chain alpha-ketoacid dehydrogenase (BCKD) complex. The BCKD complex catalyzes the multi-step oxidative decarboxylation of alpha-ketoacids derived from the branched-chain amino-acids valine, leucine and isoleucine producing CO2 and acyl-CoA which is subsequently utilized to produce energy. The E1 subunit catalyzes the first step with the decarboxylation of the alpha-ketoacid forming an enzyme-product intermediate. A reductive acylation mediated by the lipoylamide cofactor of E2 extracts the acyl group from the E1 active site for the next step of the reaction. The protein is 2-oxoisovalerate dehydrogenase subunit beta, mitochondrial (BCKDHB) of Bos taurus (Bovine).